The chain runs to 323 residues: Large ribosomal subunit protein uL10x (323 aa).

A disordered region spans residues 287–323 (DAGGGSAQAGAAAKVEEKKEESDEEDYEGGFGLFDEE). Residue Ser308 is modified to Phosphoserine. Over residues 308 to 323 (SDEEDYEGGFGLFDEE) the composition is skewed to acidic residues. Tyr313 carries the phosphotyrosine modification.

The protein belongs to the universal ribosomal protein uL10 family. P0 forms a pentameric complex by interaction with dimers of P1 and P2.

Its function is as follows. Ribosomal protein P0 is the functional equivalent of E.coli protein L10. The polypeptide is Large ribosomal subunit protein uL10x (RPP0C) (Arabidopsis thaliana (Mouse-ear cress)).